The primary structure comprises 220 residues: Thiamine-phosphate synthase (220 aa).

4-amino-2-methyl-5-(diphosphooxymethyl)pyrimidine-binding positions include 47 to 51 (QYREK) and asparagine 78. Residues aspartate 79 and aspartate 98 each contribute to the Mg(2+) site. Serine 117 is a 4-amino-2-methyl-5-(diphosphooxymethyl)pyrimidine binding site. Residue 143–145 (TAT) coordinates 2-[(2R,5Z)-2-carboxy-4-methylthiazol-5(2H)-ylidene]ethyl phosphate. 4-amino-2-methyl-5-(diphosphooxymethyl)pyrimidine is bound at residue lysine 146. 2-[(2R,5Z)-2-carboxy-4-methylthiazol-5(2H)-ylidene]ethyl phosphate contacts are provided by residues glycine 174 and 194 to 195 (IS).

Belongs to the thiamine-phosphate synthase family. The cofactor is Mg(2+).

The enzyme catalyses 2-[(2R,5Z)-2-carboxy-4-methylthiazol-5(2H)-ylidene]ethyl phosphate + 4-amino-2-methyl-5-(diphosphooxymethyl)pyrimidine + 2 H(+) = thiamine phosphate + CO2 + diphosphate. It catalyses the reaction 2-(2-carboxy-4-methylthiazol-5-yl)ethyl phosphate + 4-amino-2-methyl-5-(diphosphooxymethyl)pyrimidine + 2 H(+) = thiamine phosphate + CO2 + diphosphate. It carries out the reaction 4-methyl-5-(2-phosphooxyethyl)-thiazole + 4-amino-2-methyl-5-(diphosphooxymethyl)pyrimidine + H(+) = thiamine phosphate + diphosphate. Its pathway is cofactor biosynthesis; thiamine diphosphate biosynthesis; thiamine phosphate from 4-amino-2-methyl-5-diphosphomethylpyrimidine and 4-methyl-5-(2-phosphoethyl)-thiazole: step 1/1. In terms of biological role, condenses 4-methyl-5-(beta-hydroxyethyl)thiazole monophosphate (THZ-P) and 2-methyl-4-amino-5-hydroxymethyl pyrimidine pyrophosphate (HMP-PP) to form thiamine monophosphate (TMP). This is Thiamine-phosphate synthase from Methanosarcina barkeri (strain Fusaro / DSM 804).